The following is a 1240-amino-acid chain: Selection and upkeep of intraepithelial T-cells protein 6 (1240 aa).

The first 24 residues, 1 to 24, serve as a signal peptide directing secretion; it reads MGTIGVPLTAHCVVLFLLQMVALS. At 25-1086 the chain is on the extracellular side; it reads TEQFTVNGLE…CNKRNPFWKK (1062 aa). One can recognise an Ig-like V-type domain in the interval 26–141; the sequence is EQFTVNGLES…EEHIIEVKVT (116 aa). A disulfide bridge links Cys-49 with Cys-123. The region spanning 142-231 is the Ig-like C1-type domain; the sequence is ATSSDIQILM…FVTHQEESIS (90 aa). N-linked (GlcNAc...) asparagine glycans are attached at residues Asn-155, Asn-200, and Asn-314. A disulfide bond links Cys-163 and Cys-217. The helical transmembrane segment at 1087–1107 threads the bilayer; the sequence is HALDLGISVFAIIVVTLIRHL. Over 1108 to 1125 the chain is Cytoplasmic; that stretch reads NQREADQHFELDTLWSKD. The helical transmembrane segment at 1126–1146 threads the bilayer; it reads TSVILCVLIMFNNRLKALIYF. The Extracellular segment spans residues 1147–1167; that stretch reads RLYGYSPPGKTYKYIVNYILR. Residues 1168 to 1188 form a helical membrane-spanning segment; sequence FSQPLFFIVYSAIILVMHLQI. The Cytoplasmic portion of the chain corresponds to 1189–1205; it reads QNTDSLFSLYNSWMVEM. Residues 1206–1226 traverse the membrane as a helical segment; that stretch reads IMVLGLLLAIFNVKNIATALL. Residues 1227–1240 lie on the Extracellular side of the membrane; sequence HLGRTTLRLFRIKD.

It belongs to the SKINT family. In terms of tissue distribution, expressed in skin.

The protein localises to the membrane. Functionally, may act by engaging a cell surface molecule on immature T-cells in the embryonic thymus. The polypeptide is Selection and upkeep of intraepithelial T-cells protein 6 (Skint6) (Mus musculus (Mouse)).